Here is a 236-residue protein sequence, read N- to C-terminus: MATPHINAQAGDFAETVLMPGDPLRAKFIAENFLEDVKQVCDVRNMFGYTGTYKGKKVSVMGHGMGIPSCCIYVHELIAEYGVKNVIRVGSCGAVHDDVKLMDVVIGMGASTDSKVNRIRFNNHDFAAIADFGLLETAVGQARELNVPVKVGNVFSADLFYSPEADLFDKMEKLGILGVDMEAAGIYGVAADLGAKALTILTVSDHIKRGEKLSSEDRQKSFNDMMTVALETAIKL.

Residue His-5 participates in a purine D-ribonucleoside binding. Phosphate contacts are provided by residues Gly-21, Arg-25, Arg-44, and 88–91 (RVGS). A purine D-ribonucleoside is bound by residues 180 to 182 (DME) and 204 to 205 (SD). Asp-205 (proton donor) is an active-site residue.

The protein belongs to the PNP/UDP phosphorylase family. As to quaternary structure, homohexamer; trimer of homodimers.

It carries out the reaction a purine D-ribonucleoside + phosphate = a purine nucleobase + alpha-D-ribose 1-phosphate. The enzyme catalyses a purine 2'-deoxy-D-ribonucleoside + phosphate = a purine nucleobase + 2-deoxy-alpha-D-ribose 1-phosphate. Catalyzes the reversible phosphorolytic breakdown of the N-glycosidic bond in the beta-(deoxy)ribonucleoside molecules, with the formation of the corresponding free purine bases and pentose-1-phosphate. The protein is Purine nucleoside phosphorylase DeoD-type 2 of Aliivibrio fischeri (strain ATCC 700601 / ES114) (Vibrio fischeri).